A 253-amino-acid polypeptide reads, in one-letter code: 3-dehydroquinate dehydratase (253 aa).

3-dehydroquinate-binding positions include 46–48 and Arg-82; that span reads EFR. His-143 acts as the Proton donor/acceptor in catalysis. Lys-170 (schiff-base intermediate with substrate) is an active-site residue. 3 residues coordinate 3-dehydroquinate: Arg-213, Ser-232, and Gln-236.

This sequence belongs to the type-I 3-dehydroquinase family. As to quaternary structure, homodimer.

The catalysed reaction is 3-dehydroquinate = 3-dehydroshikimate + H2O. The protein operates within metabolic intermediate biosynthesis; chorismate biosynthesis; chorismate from D-erythrose 4-phosphate and phosphoenolpyruvate: step 3/7. Its function is as follows. Involved in the third step of the chorismate pathway, which leads to the biosynthesis of aromatic amino acids. Catalyzes the cis-dehydration of 3-dehydroquinate (DHQ) and introduces the first double bond of the aromatic ring to yield 3-dehydroshikimate. The polypeptide is 3-dehydroquinate dehydratase (Clostridium novyi (strain NT)).